We begin with the raw amino-acid sequence, 949 residues long: Protocadherin alpha-11 (949 aa).

The signal sequence occupies residues 1–29; the sequence is MFGFQRRGLGTPRLQLWLLLLEFWEVGSG. Cadherin domains follow at residues 30 to 133, 157 to 242, 243 to 349, 350 to 454, 455 to 564, and 580 to 677; these read QLHY…PPVF, ASDA…DPDF, DKSE…SPEV, AVTS…APAF, AQPE…APAL, and VPRS…APKA. Residues 30 to 696 are Extracellular-facing; the sequence is QLHYSVSEEA…SPEAALVDVN (667 aa). 2 N-linked (GlcNAc...) asparagine glycosylation sites follow: Asn-265 and Asn-304. N-linked (GlcNAc...) asparagine glycosylation is present at Asn-547. The chain crosses the membrane as a helical span at residues 697-717; the sequence is VYLIIAICVVSSLLVLTLLLY. The Cytoplasmic segment spans residues 718-949; the sequence is TALWCSATPT…GNSTTDNSDQ (232 aa). PXXP repeat units follow at residues 733–736 and 773–776; these read PGKP and PSLP. The interval 733-893 is 6 X 4 AA repeats of P-X-X-P; the sequence is PGKPTLVCSR…PDKFIIPGSP (161 aa). Disordered stretches follow at residues 753–807, 826–858, and 870–889; these read RRQR…DWRY, ILRA…PPVG, and YGPG…KFII. Residues 780–789 show a composition bias toward basic and acidic residues; sequence NKEEEGERQE. PXXP repeat units lie at residues 795–798, 831–834, 872–875, and 890–893; these read PGQP, PGGP, PGNP, and PGSP. Residues 900 to 949 form a disordered region; it reads QEPANSQIDKSDFITFGKKEETKKKKKKKKGNKTQEKKEKGNSTTDNSDQ. The segment covering 908–922 has biased composition (basic and acidic residues); that stretch reads DKSDFITFGKKEETK.

It localises to the cell membrane. Functionally, potential calcium-dependent cell-adhesion protein. May be involved in the establishment and maintenance of specific neuronal connections in the brain. The chain is Protocadherin alpha-11 (PCDHA11) from Pan troglodytes (Chimpanzee).